Here is a 213-residue protein sequence, read N- to C-terminus: Small ribosomal subunit protein uS4 (213 aa).

Residues 16–53 form a disordered region; that stretch reads GTDLGLKSGVKPYDVKTKKSARPPGQHGVSRNKSSEYS. The segment covering 44 to 53 has biased composition (polar residues); the sequence is VSRNKSSEYS. Positions 97 to 163 constitute an S4 RNA-binding domain; it reads SRLDNVVYRM…EKSREQLRIK (67 aa).

The protein belongs to the universal ribosomal protein uS4 family. In terms of assembly, part of the 30S ribosomal subunit. Contacts protein S5. The interaction surface between S4 and S5 is involved in control of translational fidelity.

Its function is as follows. One of the primary rRNA binding proteins, it binds directly to 16S rRNA where it nucleates assembly of the body of the 30S subunit. Functionally, with S5 and S12 plays an important role in translational accuracy. The sequence is that of Small ribosomal subunit protein uS4 from Psychrobacter cryohalolentis (strain ATCC BAA-1226 / DSM 17306 / VKM B-2378 / K5).